A 469-amino-acid polypeptide reads, in one-letter code: 3-isopropylmalate dehydratase large subunit (469 aa).

Positions 347, 407, and 410 each coordinate [4Fe-4S] cluster.

Belongs to the aconitase/IPM isomerase family. LeuC type 1 subfamily. In terms of assembly, heterodimer of LeuC and LeuD. The cofactor is [4Fe-4S] cluster.

The enzyme catalyses (2R,3S)-3-isopropylmalate = (2S)-2-isopropylmalate. Its pathway is amino-acid biosynthesis; L-leucine biosynthesis; L-leucine from 3-methyl-2-oxobutanoate: step 2/4. Functionally, catalyzes the isomerization between 2-isopropylmalate and 3-isopropylmalate, via the formation of 2-isopropylmaleate. This is 3-isopropylmalate dehydratase large subunit from Prochlorococcus marinus subsp. pastoris (strain CCMP1986 / NIES-2087 / MED4).